The chain runs to 504 residues: Glucose-6-phosphate isomerase (504 aa).

Catalysis depends on glutamate 333, which acts as the Proton donor. Active-site residues include histidine 364 and lysine 473.

The protein belongs to the GPI family.

Its subcellular location is the cytoplasm. The enzyme catalyses alpha-D-glucose 6-phosphate = beta-D-fructose 6-phosphate. The protein operates within carbohydrate biosynthesis; gluconeogenesis. Its pathway is carbohydrate degradation; glycolysis; D-glyceraldehyde 3-phosphate and glycerone phosphate from D-glucose: step 2/4. Its function is as follows. Catalyzes the reversible isomerization of glucose-6-phosphate to fructose-6-phosphate. The protein is Glucose-6-phosphate isomerase of Xanthomonas campestris pv. campestris (strain B100).